A 295-amino-acid polypeptide reads, in one-letter code: Probable porphobilinogen deaminase (295 aa).

S-(dipyrrolylmethanemethyl)cysteine is present on Cys-234.

Belongs to the HMBS family. Dipyrromethane serves as cofactor.

It catalyses the reaction 4 porphobilinogen + H2O = hydroxymethylbilane + 4 NH4(+). It participates in porphyrin-containing compound metabolism; protoporphyrin-IX biosynthesis; coproporphyrinogen-III from 5-aminolevulinate: step 2/4. Its function is as follows. Tetrapolymerization of the monopyrrole PBG into the hydroxymethylbilane pre-uroporphyrinogen in several discrete steps. This chain is Probable porphobilinogen deaminase (hemC), found in Thermoplasma acidophilum (strain ATCC 25905 / DSM 1728 / JCM 9062 / NBRC 15155 / AMRC-C165).